The chain runs to 130 residues: Small ribosomal subunit protein uS8 (130 aa).

The protein belongs to the universal ribosomal protein uS8 family. In terms of assembly, part of the 30S ribosomal subunit. Contacts proteins S5 and S12.

Functionally, one of the primary rRNA binding proteins, it binds directly to 16S rRNA central domain where it helps coordinate assembly of the platform of the 30S subunit. This chain is Small ribosomal subunit protein uS8, found in Vibrio campbellii (strain ATCC BAA-1116).